The primary structure comprises 211 residues: Large ribosomal subunit protein uL3 (211 aa).

Belongs to the universal ribosomal protein uL3 family. In terms of assembly, part of the 50S ribosomal subunit. Forms a cluster with proteins L14 and L19.

One of the primary rRNA binding proteins, it binds directly near the 3'-end of the 23S rRNA, where it nucleates assembly of the 50S subunit. This is Large ribosomal subunit protein uL3 from Geobacter sp. (strain M21).